The following is an 878-amino-acid chain: Aminopeptidase M1-A (878 aa).

The interval 105–212 (VGEGTLVIAF…MSTYLVAVIV (108 aa)) is required for membrane association. Substrate is bound by residues Glu145 and 278 to 282 (GAMEN). Zn(2+) is bound at residue His314. The active-site Proton acceptor is the Glu315. His318 and Glu337 together coordinate Zn(2+). Residues 727–728 (LL) carry the Dileucine internalization motif motif.

The protein belongs to the peptidase M1 family. Homodimer. Requires Zn(2+) as cofactor.

The protein localises to the membrane. It localises to the microsome membrane. The protein resides in the cytoplasm. It catalyses the reaction Release of an N-terminal amino acid, Xaa-|-Yaa- from a peptide, amide or arylamide. Xaa is preferably Ala, but may be most amino acids including Pro (slow action). When a terminal hydrophobic residue is followed by a prolyl residue, the two may be released as an intact Xaa-Pro dipeptide.. This chain is Aminopeptidase M1-A, found in Oryza sativa subsp. japonica (Rice).